Consider the following 283-residue polypeptide: Elongation factor Ts (283 aa).

The interval 79–82 is involved in Mg(2+) ion dislocation from EF-Tu; that stretch reads TDFV.

It belongs to the EF-Ts family.

It is found in the cytoplasm. In terms of biological role, associates with the EF-Tu.GDP complex and induces the exchange of GDP to GTP. It remains bound to the aminoacyl-tRNA.EF-Tu.GTP complex up to the GTP hydrolysis stage on the ribosome. The protein is Elongation factor Ts of Shewanella oneidensis (strain ATCC 700550 / JCM 31522 / CIP 106686 / LMG 19005 / NCIMB 14063 / MR-1).